The following is a 148-amino-acid chain: Lysozyme C (148 aa).

The N-terminal stretch at 1–18 is a signal peptide; it reads MKALIILGLVLLSVTVQG. One can recognise a C-type lysozyme domain in the interval 19-148; it reads KIFERCELAR…VSQYVKGCGV (130 aa). Intrachain disulfides connect Cys-24-Cys-146, Cys-48-Cys-134, Cys-83-Cys-99, and Cys-95-Cys-113. Active-site residues include Glu-53 and Asp-71.

This sequence belongs to the glycosyl hydrolase 22 family. Monomer.

Its subcellular location is the secreted. The enzyme catalyses Hydrolysis of (1-&gt;4)-beta-linkages between N-acetylmuramic acid and N-acetyl-D-glucosamine residues in a peptidoglycan and between N-acetyl-D-glucosamine residues in chitodextrins.. Lysozymes have primarily a bacteriolytic function; those in tissues and body fluids are associated with the monocyte-macrophage system and enhance the activity of immunoagents. This is Lysozyme C (LYZ) from Nasalis larvatus (Proboscis monkey).